Consider the following 198-residue polypeptide: Vacuolar iron transporter homolog 4 (198 aa).

The Cytoplasmic portion of the chain corresponds to 1–32 (MESNNNNLNLDMEKDQETTFDYSKRAQWLRAA). The helical transmembrane segment at 33 to 53 (VLGANDGLVSTASLMMGIGAV) threads the bilayer. At 54–60 (KQDVRIM) the chain is on the vacuolar side. The chain crosses the membrane as a helical span at residues 61-81 (LLTGFAGLVAGACSMAIGEFI). The Cytoplasmic segment spans residues 82–114 (SVYSQYDIEVAQMKRESGGETKKEKLPSPTQAA). The helical transmembrane segment at 115–135 (IASALAFTLGAIVPLLAAAFV) threads the bilayer. Residues 136–141 (KEYKVR) are Vacuolar-facing. The chain crosses the membrane as a helical span at residues 142-162 (IGVIVAAVTLALVMFGWLGAV). The Cytoplasmic segment spans residues 163-174 (LGKAPVVKSLVR). A helical transmembrane segment spans residues 175–195 (VLIGGWLAMAITFGFTKLVGS). Over 196–198 (HGL) the chain is Vacuolar.

This sequence belongs to the CCC1 family.

It localises to the vacuole membrane. It carries out the reaction Fe(2+)(in) = Fe(2+)(out). In terms of biological role, probable vacuolar iron transporter that may be involved in the regulation of iron distribution throughout the plant. The polypeptide is Vacuolar iron transporter homolog 4 (Arabidopsis thaliana (Mouse-ear cress)).